The primary structure comprises 101 residues: MTISNQSDSKPLQFHSTTMSNLCTSCGERPKWFDSARQQYSPWCSNTCKNLNQTHAVQGQPICAIEGCHRPAHFDGKTFSPGCGIRHRNEALALGITKPKN.

This is an uncharacterized protein from Acanthamoeba polyphaga mimivirus (APMV).